Here is a 58-residue protein sequence, read N- to C-terminus: UPF0434 protein NT01EI_2448 (58 aa).

The protein belongs to the UPF0434 family.

This is UPF0434 protein NT01EI_2448 from Edwardsiella ictaluri (strain 93-146).